The chain runs to 65 residues: Large ribosomal subunit protein bL35 (65 aa).

Positions 1 to 15 are enriched in basic residues; that stretch reads MPKMKTKSSAKKRFS. A disordered region spans residues 1–21; sequence MPKMKTKSSAKKRFSIRAGGS.

The protein belongs to the bacterial ribosomal protein bL35 family.

The polypeptide is Large ribosomal subunit protein bL35 (Dechloromonas aromatica (strain RCB)).